The chain runs to 262 residues: Protein crossbronx-like (262 aa).

The UBC core domain maps to arginine 15–lysine 179.

Belongs to the ubiquitin-conjugating enzyme family. FTS subfamily.

This is Protein crossbronx-like from Drosophila pseudoobscura pseudoobscura (Fruit fly).